The following is a 444-amino-acid chain: 23S rRNA (uracil(1939)-C(5))-methyltransferase RlmD (444 aa).

One can recognise a TRAM domain in the interval 5–64 (KPKLNLTSQTARIVNLSHDGRGIARVNGKATFIQGALPGEVVEFQYTRIKKDFDEGKLLS). Positions 77, 83, 86, and 166 each coordinate [4Fe-4S] cluster. S-adenosyl-L-methionine contacts are provided by Q276, F305, N310, E326, N353, and D374. The Nucleophile role is filled by C400.

This sequence belongs to the class I-like SAM-binding methyltransferase superfamily. RNA M5U methyltransferase family. RlmD subfamily.

It catalyses the reaction uridine(1939) in 23S rRNA + S-adenosyl-L-methionine = 5-methyluridine(1939) in 23S rRNA + S-adenosyl-L-homocysteine + H(+). In terms of biological role, catalyzes the formation of 5-methyl-uridine at position 1939 (m5U1939) in 23S rRNA. The sequence is that of 23S rRNA (uracil(1939)-C(5))-methyltransferase RlmD from Legionella pneumophila (strain Corby).